We begin with the raw amino-acid sequence, 156 residues long: Snaclec A15 (156 aa).

The N-terminal stretch at 1–23 (MGRFIFVRFGLLVVFLSLSGTGA) is a signal peptide. Cystine bridges form between Cys27-Cys38, Cys55-Cys152, and Cys127-Cys144. One can recognise a C-type lectin domain in the interval 34–153 (YDQHCYKAFD…CGDDYPFVCK (120 aa)). Asn141 is a glycosylation site (N-linked (GlcNAc...) asparagine).

The protein belongs to the snaclec family. In terms of assembly, heterodimer; disulfide-linked. As to expression, expressed by the venom gland.

It is found in the secreted. Interferes with one step of hemostasis (modulation of platelet aggregation, or coagulation cascade, for example). The sequence is that of Snaclec A15 from Macrovipera lebetinus (Levantine viper).